The chain runs to 1351 residues: DNA-directed RNA polymerase subunit beta' (1351 aa).

Zn(2+) is bound by residues C70, C72, C85, and C88. Positions 460, 462, and 464 each coordinate Mg(2+). Zn(2+) is bound by residues C801, C875, C882, and C885.

The protein belongs to the RNA polymerase beta' chain family. The RNAP catalytic core consists of 2 alpha, 1 beta, 1 beta' and 1 omega subunit. When a sigma factor is associated with the core the holoenzyme is formed, which can initiate transcription. Mg(2+) serves as cofactor. Zn(2+) is required as a cofactor.

It catalyses the reaction RNA(n) + a ribonucleoside 5'-triphosphate = RNA(n+1) + diphosphate. In terms of biological role, DNA-dependent RNA polymerase catalyzes the transcription of DNA into RNA using the four ribonucleoside triphosphates as substrates. This is DNA-directed RNA polymerase subunit beta' from Syntrophobacter fumaroxidans (strain DSM 10017 / MPOB).